Consider the following 497-residue polypeptide: 4,4'-diaponeurosporene oxygenase (497 aa).

An FAD-binding site is contributed by 7 to 19 (VIGGGLGGISAAI).

The protein belongs to the carotenoid/retinoid oxidoreductase family. CrtP subfamily. It depends on FAD as a cofactor.

It catalyses the reaction all-trans-4,4'-diaponeurosporene + 2 AH2 + 2 O2 = 4,4'-diaponeurosporenal + 2 A + 3 H2O. It participates in carotenoid biosynthesis; staphyloxanthin biosynthesis; staphyloxanthin from farnesyl diphosphate: step 3/5. Its function is as follows. Involved in the biosynthesis of the yellow-orange carotenoid staphyloxanthin, which plays a role in the virulence via its protective function against oxidative stress. Catalyzes the oxidation of the terminal methyl side group of 4,4'-diaponeurosporene to form 4,4'-diaponeurosporen-4-al. This Staphylococcus aureus (strain MRSA252) protein is 4,4'-diaponeurosporene oxygenase.